The sequence spans 309 residues: Diacylglycerol kinase (309 aa).

Residues 9–140 (HEIGKVTALT…IDLGRIQDDN (132 aa)) enclose the DAGKc domain. ATP contacts are provided by residues 19 to 23 (NPLSG), 76 to 82 (GDGVVSN), and Thr-101. Mg(2+) contacts are provided by Asp-226, Asp-229, and Leu-231. Asp-285 acts as the Proton acceptor in catalysis.

This sequence belongs to the diacylglycerol/lipid kinase family. It depends on Mg(2+) as a cofactor.

The protein resides in the secreted. Its subcellular location is the cell wall. It carries out the reaction a 1,2-diacyl-sn-glycerol + ATP = a 1,2-diacyl-sn-glycero-3-phosphate + ADP + H(+). It catalyses the reaction N-hexadecanoylsphing-4-enine + ATP = N-(hexadecanoyl)-sphing-4-enine-1-phosphate + ADP + H(+). Functionally, catalyzes the phosphorylation of diacylglycerol (DAG) into phosphatidic acid. Is involved in the biosynthesis of phosphatidylinositol mannosides (PIMs), probably via a role in the biosynthesis of phosphatidylinositol (PI), a PIM precursor, which is derived from phosphatidic acid. Is also able to phosphorylate other various amphipathic lipids of host and bacterial origin in vitro, such as ceramide. The protein is Diacylglycerol kinase (dagK) of Mycobacterium tuberculosis (strain CDC 1551 / Oshkosh).